Reading from the N-terminus, the 198-residue chain is MSYYAFEGLIPVVHPDAFVHPSAVLIGDVIVGAGVYIGPLASLRGDYGRLILEAGSNLQDGCIMHGYCDTDTIVHENGHIGHGAILHGCVVGRDALVGMNSVIMDGAVIGEESIVAAMSFVKAGFQGEARQLLVGSPARVLRQVTDQELHWKRLNTKEYQDLAIRCRTGLSETKPLTQVEENRPRLKGTTDVKPKSAQ.

The disordered stretch occupies residues 179–198 (VEENRPRLKGTTDVKPKSAQ). Over residues 180 to 198 (EENRPRLKGTTDVKPKSAQ) the composition is skewed to basic and acidic residues.

The protein belongs to the transferase hexapeptide repeat family.

It functions in the pathway amine and polyamine metabolism; carnitine metabolism. Overproduction of CaiE stimulates the activity of CaiB and CaiD. The protein is Carnitine operon protein CaiE of Salmonella enteritidis PT4 (strain P125109).